The primary structure comprises 78 residues: Small ribosomal subunit protein bS16c (78 aa).

Belongs to the bacterial ribosomal protein bS16 family.

It is found in the plastid. Its subcellular location is the chloroplast. The polypeptide is Small ribosomal subunit protein bS16c (Chara vulgaris (Common stonewort)).